The primary structure comprises 284 residues: Xyloglucan endotransglucosylase/hydrolase protein 22 (284 aa).

The N-terminal stretch at 1-21 (MAITYLLPLFLSLIITSSVSA) is a signal peptide. Residues 22–211 (NFQRDVEITW…WSKAPFTASY (190 aa)) form the GH16 domain. Catalysis depends on Glu-97, which acts as the Nucleophile. Catalysis depends on Glu-101, which acts as the Proton donor. Position 101 (Glu-101) interacts with xyloglucan. Asn-105 carries an N-linked (GlcNAc...) asparagine glycan. Xyloglucan contacts are provided by residues 114-116 (HTN), 124-126 (DKE), 190-191 (DW), and Gly-195. Cys-219 and Cys-228 are disulfide-bonded. N-linked (GlcNAc...) asparagine glycosylation is present at Asn-230. An intrachain disulfide couples Cys-267 to Cys-281. Arg-272 serves as a coordination point for xyloglucan.

This sequence belongs to the glycosyl hydrolase 16 family. XTH group 2 subfamily. Contains at least one intrachain disulfide bond essential for its enzymatic activity. In terms of processing, N-glycosylated; essential for its enzymatic activity. Highly expressed. Predominantly expressed in green siliques. Expressed in young expanding leaves, trichomes, lateral root primordia, vascular tissue, abscission zones and elongating hypocols. Following wind stimulation, it decreases in the leaves of wind-stimulated plants, while it strongly increases in sites around cells of the pith parenchyma, between the vascular elements, and within the epidermis.

Its subcellular location is the secreted. It is found in the cell wall. The protein resides in the extracellular space. It localises to the apoplast. It carries out the reaction breaks a beta-(1-&gt;4) bond in the backbone of a xyloglucan and transfers the xyloglucanyl segment on to O-4 of the non-reducing terminal glucose residue of an acceptor, which can be a xyloglucan or an oligosaccharide of xyloglucan.. Functionally, catalyzes xyloglucan endohydrolysis (XEH) and/or endotransglycosylation (XET). Cleaves and religates xyloglucan polymers, an essential constituent of the primary cell wall, and thereby participates in cell wall construction of growing tissues. Its induction in case of mechanical stress, suggests that it may contribute in the adaptive changes in morphogenesis by being recruited to alter tissues tensil strength, or flexibility, enabling adaptation to mechanically stressful environments. This is Xyloglucan endotransglucosylase/hydrolase protein 22 (XTH22) from Arabidopsis thaliana (Mouse-ear cress).